A 311-amino-acid chain; its full sequence is Aspartate carbamoyltransferase catalytic subunit (311 aa).

Carbamoyl phosphate is bound by residues arginine 58 and threonine 59. Lysine 86 is a binding site for L-aspartate. Carbamoyl phosphate is bound by residues arginine 108, histidine 136, and glutamine 139. L-aspartate is bound by residues arginine 169 and arginine 223. Carbamoyl phosphate is bound by residues glycine 264 and proline 265.

Belongs to the aspartate/ornithine carbamoyltransferase superfamily. ATCase family. Heterododecamer (2C3:3R2) of six catalytic PyrB chains organized as two trimers (C3), and six regulatory PyrI chains organized as three dimers (R2).

The enzyme catalyses carbamoyl phosphate + L-aspartate = N-carbamoyl-L-aspartate + phosphate + H(+). The protein operates within pyrimidine metabolism; UMP biosynthesis via de novo pathway; (S)-dihydroorotate from bicarbonate: step 2/3. Catalyzes the condensation of carbamoyl phosphate and aspartate to form carbamoyl aspartate and inorganic phosphate, the committed step in the de novo pyrimidine nucleotide biosynthesis pathway. In Ruegeria pomeroyi (strain ATCC 700808 / DSM 15171 / DSS-3) (Silicibacter pomeroyi), this protein is Aspartate carbamoyltransferase catalytic subunit.